The following is a 63-amino-acid chain: Large ribosomal subunit protein eL37 (63 aa).

Residues Cys-20, Cys-23, Cys-35, and Cys-38 each contribute to the Zn(2+) site. A C4-type zinc finger spans residues 20-38 (CRRCGRRAFNVKKGYCAAC).

The protein belongs to the eukaryotic ribosomal protein eL37 family. In terms of assembly, part of the 50S ribosomal subunit. Requires Zn(2+) as cofactor.

Functionally, binds to the 23S rRNA. The polypeptide is Large ribosomal subunit protein eL37 (Thermococcus kodakarensis (strain ATCC BAA-918 / JCM 12380 / KOD1) (Pyrococcus kodakaraensis (strain KOD1))).